Here is a 480-residue protein sequence, read N- to C-terminus: MKNKEKYLTNFSEAKRKEATQKYNIIKPFILGKQSLSSISKSKGIALSTLYRWNKLYKEQGLTGLIHNTRVDKGEHKLKQNIIDEIKRLALKNKRNSIATIHRKIANYCIENNFYKPSYKQVYSIIKAMPKSVIDFSHQGEKYYQNKYDLIQIRESSRPNEIWQADHTLLDIYILDQKGNINRPWLTIIMDDYSRAIAGYFISFDAPNAQNTALTLHQAIWNKNNTNWPVCGIPEKFYTDHGSDFTSHHMEQVAIDLKINLMFSKVGVPRGRGKIERFFQTVNQTFLEQLPGYINNNDTSSDLIDFQNFEEKLRYFLIEDYNQKEHSAIQSTPINRWNSNHFFPNMPSSLEQLDLLLLEIPKSRKIHSDGIHFQGFRYSNTNLTAYVGEYVLIRYNPNDMAEIRVFYRDEFLCTAISPDLADYSIDIKEIQHARSQRRKHLKQNIASPSTTDLIKEEKSYGYSPQETTKNVKKLKRYRND.

Positions 36 to 55 (LSSISKSKGIALSTLYRWNK) form a DNA-binding region, H-T-H motif. Residues 155–341 (ESSRPNEIWQ…TPINRWNSNH (187 aa)) form the Integrase catalytic domain. The interval 438 to 480 (RKHLKQNIASPSTTDLIKEEKSYGYSPQETTKNVKKLKRYRND) is disordered. Positions 470-480 (NVKKLKRYRND) are enriched in basic residues.

This Staphylococcus aureus protein is Transposase for transposon Tn552.